Consider the following 291-residue polypeptide: Acetyl-coenzyme A carboxylase carboxyl transferase subunit beta (291 aa).

A CoA carboxyltransferase N-terminal domain is found at 29 to 291; that stretch reads LWSKCPECGE…MHQQPAAVSA (263 aa). Positions 33, 36, 52, and 55 each coordinate Zn(2+). A C4-type zinc finger spans residues 33–55; sequence CPECGEVVYRKDLIANASVCASC.

Belongs to the AccD/PCCB family. In terms of assembly, acetyl-CoA carboxylase is a heterohexamer composed of biotin carboxyl carrier protein (AccB), biotin carboxylase (AccC) and two subunits each of ACCase subunit alpha (AccA) and ACCase subunit beta (AccD). Zn(2+) serves as cofactor.

The protein resides in the cytoplasm. It catalyses the reaction N(6)-carboxybiotinyl-L-lysyl-[protein] + acetyl-CoA = N(6)-biotinyl-L-lysyl-[protein] + malonyl-CoA. It functions in the pathway lipid metabolism; malonyl-CoA biosynthesis; malonyl-CoA from acetyl-CoA: step 1/1. Its function is as follows. Component of the acetyl coenzyme A carboxylase (ACC) complex. Biotin carboxylase (BC) catalyzes the carboxylation of biotin on its carrier protein (BCCP) and then the CO(2) group is transferred by the transcarboxylase to acetyl-CoA to form malonyl-CoA. The chain is Acetyl-coenzyme A carboxylase carboxyl transferase subunit beta from Synechococcus sp. (strain RCC307).